Consider the following 102-residue polypeptide: Small ribosomal subunit protein uS10 (102 aa).

The protein belongs to the universal ribosomal protein uS10 family. Part of the 30S ribosomal subunit.

In terms of biological role, involved in the binding of tRNA to the ribosomes. The protein is Small ribosomal subunit protein uS10 of Exiguobacterium sp. (strain ATCC BAA-1283 / AT1b).